Reading from the N-terminus, the 266-residue chain is Cytosolic Fe-S cluster assembly factor Nubp2 homolog (266 aa).

14–21 (GKGGVGKS) lines the ATP pocket. 2 residues coordinate [4Fe-4S] cluster: cysteine 188 and cysteine 191.

Belongs to the Mrp/NBP35 ATP-binding proteins family. Nubp2/CFD1 subfamily. Heterotetramer of 2 Nubp1 and 2 Nubp2 chains. [4Fe-4S] cluster is required as a cofactor.

It localises to the cytoplasm. Component of the cytosolic iron-sulfur (Fe/S) protein assembly (CIA) machinery. Required for maturation of extramitochondrial Fe-S proteins. The Nubp1-Nubp2 heterotetramer forms a Fe-S scaffold complex, mediating the de novo assembly of an Fe-S cluster and its transfer to target apoproteins. The sequence is that of Cytosolic Fe-S cluster assembly factor Nubp2 homolog from Drosophila virilis (Fruit fly).